The primary structure comprises 737 residues: Phosphoribosylformylglycinamidine synthase subunit PurL (737 aa).

Histidine 50 is an active-site residue. Positions 53 and 92 each coordinate ATP. Mg(2+) is bound at residue glutamate 94. Residues 95 to 98 (SHNH) and arginine 117 each bind substrate. Histidine 96 serves as the catalytic Proton acceptor. Residue aspartate 118 coordinates Mg(2+). Glutamine 241 is a binding site for substrate. Position 269 (aspartate 269) interacts with Mg(2+). 313–315 (ESQ) lines the substrate pocket. ATP contacts are provided by aspartate 494 and glycine 531. A Mg(2+)-binding site is contributed by asparagine 532. Serine 534 provides a ligand contact to substrate.

This sequence belongs to the FGAMS family. In terms of assembly, monomer. Part of the FGAM synthase complex composed of 1 PurL, 1 PurQ and 2 PurS subunits.

Its subcellular location is the cytoplasm. It catalyses the reaction N(2)-formyl-N(1)-(5-phospho-beta-D-ribosyl)glycinamide + L-glutamine + ATP + H2O = 2-formamido-N(1)-(5-O-phospho-beta-D-ribosyl)acetamidine + L-glutamate + ADP + phosphate + H(+). It functions in the pathway purine metabolism; IMP biosynthesis via de novo pathway; 5-amino-1-(5-phospho-D-ribosyl)imidazole from N(2)-formyl-N(1)-(5-phospho-D-ribosyl)glycinamide: step 1/2. Functionally, part of the phosphoribosylformylglycinamidine synthase complex involved in the purines biosynthetic pathway. Catalyzes the ATP-dependent conversion of formylglycinamide ribonucleotide (FGAR) and glutamine to yield formylglycinamidine ribonucleotide (FGAM) and glutamate. The FGAM synthase complex is composed of three subunits. PurQ produces an ammonia molecule by converting glutamine to glutamate. PurL transfers the ammonia molecule to FGAR to form FGAM in an ATP-dependent manner. PurS interacts with PurQ and PurL and is thought to assist in the transfer of the ammonia molecule from PurQ to PurL. This is Phosphoribosylformylglycinamidine synthase subunit PurL from Nitrobacter winogradskyi (strain ATCC 25391 / DSM 10237 / CIP 104748 / NCIMB 11846 / Nb-255).